The following is a 396-amino-acid chain: Putative nickel insertion protein (396 aa).

A disordered region spans residues 333-355; that stretch reads RSKLARESQTVETPDGPAKGKTV.

It belongs to the LarC family.

The sequence is that of Putative nickel insertion protein from Rhodopirellula baltica (strain DSM 10527 / NCIMB 13988 / SH1).